Consider the following 276-residue polypeptide: Omega-amidase NIT2 (276 aa).

The CN hydrolase domain maps to 4-248 (FRLALIQLQV…ETILYSDIDL (245 aa)). Serine 26 bears the Phosphoserine mark. Glutamate 43 acts as the Proton acceptor in catalysis. Lysine 68 carries the N6-acetyllysine; alternate modification. An N6-succinyllysine; alternate modification is found at lysine 68. Lysine 112 functions as the Proton donor in the catalytic mechanism. N6-succinyllysine occurs at positions 123 and 130. Cysteine 153 (nucleophile) is an active-site residue.

The protein belongs to the carbon-nitrogen hydrolase superfamily. NIT1/NIT2 family. Homodimer.

It is found in the cytoplasm. The catalysed reaction is a monoamide of a dicarboxylate + H2O = a dicarboxylate + NH4(+). It carries out the reaction 2-oxoglutaramate + H2O = 2-oxoglutarate + NH4(+). It catalyses the reaction 2-oxosuccinamate + H2O = oxaloacetate + NH4(+). In terms of biological role, has omega-amidase activity. The role of omega-amidase is to remove potentially toxic intermediates by converting 2-oxoglutaramate and 2-oxosuccinamate to biologically useful 2-oxoglutarate and oxaloacetate, respectively. Can also hydrolyze gamma-monomethyl-alpha-ketoglutarate in vitro. This chain is Omega-amidase NIT2, found in Mus musculus (Mouse).